A 1181-amino-acid chain; its full sequence is DNA-directed RNA polymerase subunit beta' (1181 aa).

4 residues coordinate Zn(2+): Cys68, Cys70, Cys83, and Cys86. Asp457, Asp459, and Asp461 together coordinate Mg(2+). Residues Cys802, Cys876, Cys883, and Cys886 each contribute to the Zn(2+) site.

This sequence belongs to the RNA polymerase beta' chain family. In terms of assembly, the RNAP catalytic core consists of 2 alpha, 1 beta, 1 beta' and 1 omega subunit. When a sigma factor is associated with the core the holoenzyme is formed, which can initiate transcription. Mg(2+) is required as a cofactor. The cofactor is Zn(2+).

It catalyses the reaction RNA(n) + a ribonucleoside 5'-triphosphate = RNA(n+1) + diphosphate. Functionally, DNA-dependent RNA polymerase catalyzes the transcription of DNA into RNA using the four ribonucleoside triphosphates as substrates. The sequence is that of DNA-directed RNA polymerase subunit beta' from Syntrophomonas wolfei subsp. wolfei (strain DSM 2245B / Goettingen).